Here is a 523-residue protein sequence, read N- to C-terminus: Excitatory amino acid transporter 3 (523 aa).

Residues 1-18 are Cytoplasmic-facing; it reads MGKPTSSGCDWRRFLRNH. The chain crosses the membrane as a helical span at residues 19–38; that stretch reads WLLLSTVAAVVLGIVLGVVV. Residues 39 to 61 lie on the Extracellular side of the membrane; that stretch reads RGHSELSNLDKFYFAFPGEILMR. A helical membrane pass occupies residues 62-82; the sequence is MLKLVILPLIVSSMITGVAAL. Over 83-93 the chain is Cytoplasmic; that stretch reads DSNVSGKIGLR. A helical transmembrane segment spans residues 94-114; the sequence is AVVYYFSTTVIAVILGIVLVV. Positions 98, 101, and 102 each coordinate Na(+). Topologically, residues 115–204 are extracellular; it reads SIKPGVTQKV…KTKEYKIVGL (90 aa). 3 N-linked (GlcNAc...) asparagine glycosylation sites follow: Asn-128, Asn-178, and Asn-194. Residues 205–228 traverse the membrane as a helical segment; sequence YSDGINVLGLIIFCLVFGLVIGKM. At 229–237 the chain is on the cytoplasmic side; the sequence is GEKGQILVD. The chain crosses the membrane as a helical span at residues 238–265; sequence FFNALSDATMKIVQIIMCYMPIGILFLI. Over 266-285 the chain is Extracellular; sequence AGKIIEVEDWEIFRKLGLYM. Residues 286–307 form a helical membrane-spanning segment; sequence ATVLSGLAIHSLIVLPLLYFIV. At 308 to 312 the chain is on the cytoplasmic side; sequence VRKNP. The discontinuously helical intramembrane region spans 313–343; sequence FRFALGMAQALLTALMISSSSATLPVTFRCA. The L-aspartate site is built by Ser-330 and Ser-332. Over 344 to 352 the chain is Cytoplasmic; that stretch reads EEKNQVDKR. The chain crosses the membrane as a helical span at residues 353 to 379; it reads ITRFVLPVGATINMDGTALYEAVAAVF. Na(+) is bound by residues Gly-361, Thr-363, Asn-365, and Asp-367. Thr-369 lines the L-aspartate pocket. Residues 380 to 392 lie on the Extracellular side of the membrane; the sequence is IAQLNGLDLSIGQ. The segment at residues 393–426 is an intramembrane region (discontinuously helical); it reads IVTISITATAASIGAAGVPQAGLVTMVIVLSAVG. Residues Ser-404, Ile-405, and Ala-407 each coordinate Na(+). Val-410 serves as a coordination point for L-aspartate. The Extracellular segment spans residues 427–439; sequence LPAEDVTLIIAVD. The helical transmembrane segment at 440–461 threads the bilayer; that stretch reads WLLDRFRTMVNVLGDAFGTGIV. The L-aspartate site is built by Arg-446, Thr-447, and Asn-450. Residues Asn-450 and Asp-454 each coordinate Na(+). Residues 462-523 are Cytoplasmic-facing; sequence EKLSKKELEQ…TISFTQTSQF (62 aa). Phosphoserine occurs at positions 516 and 521.

Belongs to the dicarboxylate/amino acid:cation symporter (DAACS) (TC 2.A.23) family. SLC1A1 subfamily. In terms of assembly, homotrimer. Interacts with ARL6IP5. Interacts with RTN2 (via N-terminus); the interaction promotes cell surface expression of SLC1A1. Interacts with SORCS2; this interaction is important for normal expression at the cell membrane. As to expression, detected on neurons in the brain cortex, dentate gyrus and hippocampus CA2 region (at protein level). Expressed in whole brain, brain cortex, hippocampus, cerebellum, lung, kidney, small intestine and skeletal muscle. Expressed in the renal outer medulla, medullary ray and cortex (at protein level).

The protein resides in the cell membrane. The protein localises to the apical cell membrane. Its subcellular location is the synapse. It localises to the synaptosome. It is found in the early endosome membrane. The protein resides in the late endosome membrane. The protein localises to the recycling endosome membrane. It carries out the reaction K(+)(in) + L-glutamate(out) + 3 Na(+)(out) + H(+)(out) = K(+)(out) + L-glutamate(in) + 3 Na(+)(in) + H(+)(in). The catalysed reaction is K(+)(in) + L-aspartate(out) + 3 Na(+)(out) + H(+)(out) = K(+)(out) + L-aspartate(in) + 3 Na(+)(in) + H(+)(in). The enzyme catalyses D-aspartate(out) + K(+)(in) + 3 Na(+)(out) + H(+)(out) = D-aspartate(in) + K(+)(out) + 3 Na(+)(in) + H(+)(in). It catalyses the reaction K(+)(in) + L-cysteine(out) + 3 Na(+)(out) + H(+)(out) = K(+)(out) + L-cysteine(in) + 3 Na(+)(in) + H(+)(in). Its function is as follows. Sodium-dependent, high-affinity amino acid transporter that mediates the uptake of L-glutamate and also L-aspartate and D-aspartate. Can also transport L-cysteine. Functions as a symporter that transports one amino acid molecule together with two or three Na(+) ions and one proton, in parallel with the counter-transport of one K(+) ion. Mediates Cl(-) flux that is not coupled to amino acid transport; this avoids the accumulation of negative charges due to aspartate and Na(+) symport. Plays an important role in L-glutamate and L-aspartate reabsorption in renal tubuli. Plays a redundant role in the rapid removal of released glutamate from the synaptic cleft, which is essential for terminating the postsynaptic action of glutamate. Contributes to glutathione biosynthesis and protection against oxidative stress via its role in L-glutamate and L-cysteine transport. Negatively regulated by ARL6IP5. The protein is Excitatory amino acid transporter 3 (Slc1a1) of Mus musculus (Mouse).